The chain runs to 172 residues: Translationally-controlled tumor protein (172 aa).

A TCTP domain is found at 1–172; it reads MIIYRDLISH…FKDGLEMEKC (172 aa). Phosphoserine; by PLK1 is present on serine 46. Serine 53 carries the phosphoserine modification. Serine 64 is subject to Phosphoserine; by PLK1. The required for reduction of TSC22D1 protein stability stretch occupies residues 70–172; it reads VDIVMNHHLQ…FKDGLEMEKC (103 aa).

It belongs to the TCTP family. In terms of assembly, homodimer. Interacts with STEAP3. Interacts with TSC22D1; interaction results in the destabilization of TSC22D1 protein. Found in several healthy and tumoral cells including erythrocytes, hepatocytes, macrophages, platelets, keratinocytes, erythroleukemia cells, gliomas, melanomas, hepatoblastomas, and lymphomas. It cannot be detected in kidney and renal cell carcinoma (RCC). Expressed in placenta and prostate.

Its subcellular location is the cytoplasm. In terms of biological role, involved in calcium binding and microtubule stabilization. Acts as a negative regulator of TSC22D1-mediated apoptosis, via interaction with and destabilization of TSC22D1 protein. This is Translationally-controlled tumor protein (TPT1) from Homo sapiens (Human).